We begin with the raw amino-acid sequence, 230 residues long: Translation initiation factor IF-3 (230 aa).

Disordered stretches follow at residues M1 to R21 and L184 to R230. Over residues A193–P208 the composition is skewed to low complexity. Residues A209–A220 show a composition bias toward pro residues. Positions P221–R230 are enriched in low complexity.

Belongs to the IF-3 family. As to quaternary structure, monomer.

The protein localises to the cytoplasm. In terms of biological role, IF-3 binds to the 30S ribosomal subunit and shifts the equilibrium between 70S ribosomes and their 50S and 30S subunits in favor of the free subunits, thus enhancing the availability of 30S subunits on which protein synthesis initiation begins. This is Translation initiation factor IF-3 from Anaeromyxobacter dehalogenans (strain 2CP-1 / ATCC BAA-258).